The chain runs to 113 residues: U11-theraphotoxin-Hhn1a (113 aa).

An N-terminal signal peptide occupies residues 1–21; that stretch reads MNTVRVTFLLVFVLAVSLGQA. A propeptide spanning residues 22-74 is cleaved from the precursor; the sequence is DKDENRMVMQEKTEQGKSYLDFAENLLLQKLEELEAKLLEEDSEESRNSRQKR. Disulfide bonds link Cys-75/Cys-90, Cys-82/Cys-95, and Cys-89/Cys-110.

This sequence belongs to the neurotoxin 14 (magi-1) family. 01 (HNTX-16) subfamily. In terms of tissue distribution, expressed by the venom gland.

It is found in the secreted. Its function is as follows. Probable ion channel inhibitor. This is U11-theraphotoxin-Hhn1a from Cyriopagopus hainanus (Chinese bird spider).